The sequence spans 200 residues: Probable GTP-binding protein EngB (200 aa).

One can recognise an EngB-type G domain in the interval 25-199 (SGYEVAFAGR…ISLLDRWYEW (175 aa)). Residues 33 to 40 (GRSNAGKS), 60 to 64 (GRTQL), 78 to 81 (DLPG), 145 to 148 (TKAD), and 178 to 180 (FSS) contribute to the GTP site. Mg(2+)-binding residues include S40 and T62.

Belongs to the TRAFAC class TrmE-Era-EngA-EngB-Septin-like GTPase superfamily. EngB GTPase family. Requires Mg(2+) as cofactor.

Its function is as follows. Necessary for normal cell division and for the maintenance of normal septation. The chain is Probable GTP-binding protein EngB from Legionella pneumophila (strain Corby).